The sequence spans 216 residues: Ras-related protein Rab-5C (216 aa).

Ser-30, Ala-31, Gly-33, Lys-34, Ser-35, Ser-36, His-47, Glu-48, Thr-53, and Gly-79 together coordinate GTP. Position 35 (Ser-35) interacts with Mg(2+). 2 consecutive short sequence motifs (switch) follow at residues 45–57 (QFHE…IGAA) and 78–94 (AGQE…YRGA). Thr-53 is a binding site for Mg(2+). Position 85 is a phosphoserine (Ser-85). Positions 134, 135, 137, 165, and 166 each coordinate GTP. Residues 185–216 (NEPQNAAGAPGRTRGVDLQESNPASRSQCCSN) form a disordered region. Residues 203–216 (QESNPASRSQCCSN) are compositionally biased toward polar residues. Residues Cys-213 and Cys-214 are each lipidated (S-geranylgeranyl cysteine).

Belongs to the small GTPase superfamily. Rab family. In terms of assembly, interacts with EEA1 and INCA1. Interacts with GDI1, GDI2, CHML and CHM; phosphorylation at Ser-85 disrupts this interaction. The cofactor is Mg(2+). In terms of processing, phosphorylation of Ser-85 in the switch II region by LRRK2 prevents the association of RAB regulatory proteins, including CHM, CHML and RAB GDP dissociation inhibitors GDI1 and GDI2.

The protein resides in the cell membrane. It localises to the early endosome membrane. Its subcellular location is the melanosome. It catalyses the reaction GTP + H2O = GDP + phosphate + H(+). With respect to regulation, regulated by guanine nucleotide exchange factors (GEFs) which promote the exchange of bound GDP for free GTP. Regulated by GTPase activating proteins (GAPs) which increase the GTP hydrolysis activity. Inhibited by GDP dissociation inhibitors (GDIs). Functionally, the small GTPases Rab are key regulators of intracellular membrane trafficking, from the formation of transport vesicles to their fusion with membranes. Rabs cycle between an inactive GDP-bound form and an active GTP-bound form that is able to recruit to membranes different sets of downstream effectors directly responsible for vesicle formation, movement, tethering and fusion. This is Ras-related protein Rab-5C from Mus musculus (Mouse).